The primary structure comprises 116 residues: Photosystem II reaction center Psb28 protein (116 aa).

It belongs to the Psb28 family. In terms of assembly, part of the photosystem II complex.

Its subcellular location is the plastid. The protein localises to the chloroplast thylakoid membrane. The protein is Photosystem II reaction center Psb28 protein of Guillardia theta (Cryptophyte).